The chain runs to 440 residues: Thymidine phosphorylase (440 aa).

The protein belongs to the thymidine/pyrimidine-nucleoside phosphorylase family. Homodimer.

The enzyme catalyses thymidine + phosphate = 2-deoxy-alpha-D-ribose 1-phosphate + thymine. It participates in pyrimidine metabolism; dTMP biosynthesis via salvage pathway; dTMP from thymine: step 1/2. The enzymes which catalyze the reversible phosphorolysis of pyrimidine nucleosides are involved in the degradation of these compounds and in their utilization as carbon and energy sources, or in the rescue of pyrimidine bases for nucleotide synthesis. In Salmonella paratyphi A (strain ATCC 9150 / SARB42), this protein is Thymidine phosphorylase.